The sequence spans 270 residues: MPELPEVETTLKGVSPYLKGFIIEKIVVRNPKLRWEVSKELSTFKHVKILNLTRRAKYLIIHTEQGYIIGHLGMSGSVRIVPHDNPVNKHDHFDIVMNNGKLLRYNDARRFGAWLWTNNLSEFHLFFKLGPEPLSETFNSTYLFKKSRQKSTALKTFLMDNSVVVGVGNIYANEILFLCGLHPQKIAKTLTKKQAEQLVFTIKQVLNEAIEQGGTTLKDFLQPDGRPGYFAQKLLVYGNKDKPCPRCGTKIKSIIIGQRNSFFCPQCQKK.

Catalysis depends on proline 2, which acts as the Schiff-base intermediate with DNA. Residue glutamate 3 is the Proton donor of the active site. Lysine 57 functions as the Proton donor; for beta-elimination activity in the catalytic mechanism. Positions 90, 109, and 150 each coordinate DNA. The segment at 235-269 adopts an FPG-type zinc-finger fold; it reads LVYGNKDKPCPRCGTKIKSIIIGQRNSFFCPQCQK. The active-site Proton donor; for delta-elimination activity is arginine 259.

This sequence belongs to the FPG family. In terms of assembly, monomer. Zn(2+) serves as cofactor.

It catalyses the reaction Hydrolysis of DNA containing ring-opened 7-methylguanine residues, releasing 2,6-diamino-4-hydroxy-5-(N-methyl)formamidopyrimidine.. The enzyme catalyses 2'-deoxyribonucleotide-(2'-deoxyribose 5'-phosphate)-2'-deoxyribonucleotide-DNA = a 3'-end 2'-deoxyribonucleotide-(2,3-dehydro-2,3-deoxyribose 5'-phosphate)-DNA + a 5'-end 5'-phospho-2'-deoxyribonucleoside-DNA + H(+). Functionally, involved in base excision repair of DNA damaged by oxidation or by mutagenic agents. Acts as a DNA glycosylase that recognizes and removes damaged bases. Has a preference for oxidized purines, such as 7,8-dihydro-8-oxoguanine (8-oxoG). Has AP (apurinic/apyrimidinic) lyase activity and introduces nicks in the DNA strand. Cleaves the DNA backbone by beta-delta elimination to generate a single-strand break at the site of the removed base with both 3'- and 5'-phosphates. The protein is Formamidopyrimidine-DNA glycosylase of Histophilus somni (strain 129Pt) (Haemophilus somnus).